A 217-amino-acid chain; its full sequence is Adr-2-binding protein 1 (217 aa).

A disordered region spans residues 33–65 (ARPEPQHDSLKRRNTTSSIAKKKAKMTRGDEQI). Over residues 44–58 (RRNTTSSIAKKKAKM) the composition is skewed to basic residues.

As to quaternary structure, interacts with double-stranded RNA-specific adenosine deaminase adr-2. Expressed in main body hypodermal cells, the hypodermal seam cells, pharynx, intestine and some neurons.

It localises to the nucleus. Its function is as follows. Required for the A-I editing activity of the double-stranded RNA-specific adenosine deaminase adr-2 by facilitating adr-2 nuclear localization. In Caenorhabditis elegans, this protein is Adr-2-binding protein 1.